The following is a 431-amino-acid chain: Enolase (431 aa).

(2R)-2-phosphoglycerate is bound at residue Gln-166. Glu-208 acts as the Proton donor in catalysis. Residues Asp-245, Glu-288, and Asp-315 each coordinate Mg(2+). Residues Lys-340, Arg-369, Ser-370, and Lys-391 each coordinate (2R)-2-phosphoglycerate. Lys-340 functions as the Proton acceptor in the catalytic mechanism.

Belongs to the enolase family. Mg(2+) is required as a cofactor.

It is found in the cytoplasm. It localises to the secreted. The protein resides in the cell surface. The catalysed reaction is (2R)-2-phosphoglycerate = phosphoenolpyruvate + H2O. It participates in carbohydrate degradation; glycolysis; pyruvate from D-glyceraldehyde 3-phosphate: step 4/5. Functionally, catalyzes the reversible conversion of 2-phosphoglycerate (2-PG) into phosphoenolpyruvate (PEP). It is essential for the degradation of carbohydrates via glycolysis. This chain is Enolase, found in Clostridium botulinum (strain ATCC 19397 / Type A).